The following is a 320-amino-acid chain: ATP-dependent 6-phosphofructokinase (320 aa).

Gly-12 contributes to the ATP binding site. 22–26 contacts ADP; that stretch reads RGVVR. Residues 73-74 and 103-106 each bind ATP; these read RF and GDGS. A Mg(2+)-binding site is contributed by Asp-104. A substrate-binding site is contributed by 126-128; the sequence is TID. The active-site Proton acceptor is Asp-128. Arg-155 serves as a coordination point for ADP. Substrate is bound by residues Arg-163 and 170-172; that span reads MGR. Residues 186–188, Lys-212, and 214–216 each bind ADP; these read GCE and KKH. Residues Glu-223, Arg-244, and 250 to 253 contribute to the substrate site; that span reads HIQR.

Belongs to the phosphofructokinase type A (PFKA) family. ATP-dependent PFK group I subfamily. Prokaryotic clade 'B1' sub-subfamily. As to quaternary structure, homotetramer. The cofactor is Mg(2+).

The protein resides in the cytoplasm. It catalyses the reaction beta-D-fructose 6-phosphate + ATP = beta-D-fructose 1,6-bisphosphate + ADP + H(+). It participates in carbohydrate degradation; glycolysis; D-glyceraldehyde 3-phosphate and glycerone phosphate from D-glucose: step 3/4. Allosterically activated by ADP and other diphosphonucleosides, and allosterically inhibited by phosphoenolpyruvate. Functionally, catalyzes the phosphorylation of D-fructose 6-phosphate to fructose 1,6-bisphosphate by ATP, the first committing step of glycolysis. This Vibrio cholerae serotype O1 (strain ATCC 39315 / El Tor Inaba N16961) protein is ATP-dependent 6-phosphofructokinase.